Consider the following 1218-residue polypeptide: Formin-A (1218 aa).

Residues 1 to 108 (MADKLYQIKL…ILGEACNYSV (108 aa)) form the C2 domain. Residues 139-539 (EEKKRHDEIQ…QISLRDKNIG (401 aa)) form the GBD/FH3 domain. The stretch at 563-638 (LKSQIESLKK…QLKLTQGTAK (76 aa)) forms a coiled coil. The interval 634 to 762 (QGTAKPDSAA…KAAAPPRKEV (129 aa)) is disordered. Pro residues predominate over residues 649–747 (APPPPPPPMT…FGKGPPPPPG (99 aa)). One can recognise an FH1 domain in the interval 652–737 (PPPPPMTGGG…AGGPPPPPPP (86 aa)). Residues 759-1155 (RKEVPVPALK…IAKREAAKKL (397 aa)) form the FH2 domain. Positions 1034–1061 (SLSQVQAEVATLRKEFVQVQKSIETLNS) form a coiled coil. Disordered regions lie at residues 1153–1179 (KKLK…TVEV) and 1198–1218 (KNRR…PIDL). Residues 1174 to 1209 (GETVEVKESVVDDLLDTIASGDAFKNRRRRARKTDQ) form the DAD domain.

This sequence belongs to the formin homology family. Diaphanous subfamily. In terms of assembly, interacts (via GBD/FH3 domain) with activated Rho-GTPases.

Formins play an important role in the nucleation of actin and the formation of linear actin filaments. This chain is Formin-A (forA), found in Dictyostelium discoideum (Social amoeba).